Reading from the N-terminus, the 183-residue chain is ATP synthase subunit delta (183 aa).

The protein belongs to the ATPase delta chain family. F-type ATPases have 2 components, F(1) - the catalytic core - and F(0) - the membrane proton channel. F(1) has five subunits: alpha(3), beta(3), gamma(1), delta(1), epsilon(1). F(0) has three main subunits: a(1), b(2) and c(10-14). The alpha and beta chains form an alternating ring which encloses part of the gamma chain. F(1) is attached to F(0) by a central stalk formed by the gamma and epsilon chains, while a peripheral stalk is formed by the delta and b chains.

It localises to the cell inner membrane. In terms of biological role, f(1)F(0) ATP synthase produces ATP from ADP in the presence of a proton or sodium gradient. F-type ATPases consist of two structural domains, F(1) containing the extramembraneous catalytic core and F(0) containing the membrane proton channel, linked together by a central stalk and a peripheral stalk. During catalysis, ATP synthesis in the catalytic domain of F(1) is coupled via a rotary mechanism of the central stalk subunits to proton translocation. Functionally, this protein is part of the stalk that links CF(0) to CF(1). It either transmits conformational changes from CF(0) to CF(1) or is implicated in proton conduction. This Desulfatibacillum aliphaticivorans protein is ATP synthase subunit delta.